Consider the following 618-residue polypeptide: UvrABC system protein C (618 aa).

In terms of domain architecture, GIY-YIG spans D13–I92. In terms of domain architecture, UVR spans L204–I239.

This sequence belongs to the UvrC family. Interacts with UvrB in an incision complex.

It is found in the cytoplasm. The UvrABC repair system catalyzes the recognition and processing of DNA lesions. UvrC both incises the 5' and 3' sides of the lesion. The N-terminal half is responsible for the 3' incision and the C-terminal half is responsible for the 5' incision. This chain is UvrABC system protein C, found in Clostridium botulinum (strain 657 / Type Ba4).